Here is a 263-residue protein sequence, read N- to C-terminus: Small ribosomal subunit protein uS3 (263 aa).

Residues 39-107 form the KH type-2 domain; sequence VREYLKKKLK…PVHVNIEEIR (69 aa). Positions 211 to 263 are disordered; the sequence is GELPPEAATPREEERRPRRAPRGDRPDGGRPGRPGGRGRGPRKADAAPAPEGE. Basic and acidic residues predominate over residues 219 to 240; the sequence is TPREEERRPRRAPRGDRPDGGR.

This sequence belongs to the universal ribosomal protein uS3 family. Part of the 30S ribosomal subunit. Forms a tight complex with proteins S10 and S14.

Functionally, binds the lower part of the 30S subunit head. Binds mRNA in the 70S ribosome, positioning it for translation. This Bordetella petrii (strain ATCC BAA-461 / DSM 12804 / CCUG 43448) protein is Small ribosomal subunit protein uS3.